A 627-amino-acid chain; its full sequence is MDIEDELPARTDRKKALVEKLGTLPPSPGVYQFRNSSGRVIYVGKAKNLRNRVRSYFRNQQQLYGKTLVLVTHIADFEVIITSSEVEALILENNMIKELKPRYNVNLKDDKTYPYLVITNEPFPRILISRQRRKDGSTWFGPYTESRQLHSILDLIGSIFPVRSCKFRLSEENIATKKYKVCLDYHIHKCKGPCEGRQSEEEYLLMIAEITRLLKGKTSTMIRSLTSAMQLFARELKFERAAEIKMQLESLKRYAERQKVVAGDGLDRDVFAVATGEEDGCGVVFKIREGKLLGSQRIYMNNVTGETDSGLQARVMEKYYLETLELLPDEILLQESLGADEEETLRALFSEKEREEAQEKKNIRFLVPQIGEKAHLVEMCRQNARHHLEEYLIQKQKRGEAAREHYGLTALKELLHLPKLPQRIECFDNSHLQGTDYVSSMICFEKGKPKKADYRKFKINSFEGSDDYAAMEEVIRRRYSGSLSSKLPWPDLIVVDGGKGQVNIAFQTLNALGLSIPIIGLAKRIEEIFTPQARDPFNLPKTSPALKLLQQMRDEAHRFAITYHRKLRSERMLQTELTTIAGIGEKTAFKLLERFGSVDAVAQATLEELTAAAGAKTATAIYRFYRP.

The GIY-YIG domain maps to 26–105; that stretch reads PSPGVYQFRN…IKELKPRYNV (80 aa). The UVR domain maps to 219–254; the sequence is STMIRSLTSAMQLFARELKFERAAEIKMQLESLKRY.

This sequence belongs to the UvrC family. In terms of assembly, interacts with UvrB in an incision complex.

Its subcellular location is the cytoplasm. In terms of biological role, the UvrABC repair system catalyzes the recognition and processing of DNA lesions. UvrC both incises the 5' and 3' sides of the lesion. The N-terminal half is responsible for the 3' incision and the C-terminal half is responsible for the 5' incision. The protein is UvrABC system protein C of Pelodictyon phaeoclathratiforme (strain DSM 5477 / BU-1).